A 706-amino-acid chain; its full sequence is Polyribonucleotide nucleotidyltransferase (706 aa).

The Mg(2+) site is built by Asp-487 and Asp-493. The region spanning 553-612 (PRLFTMKISQDKIRDVIGKGGETIRSITAETGTEINIAEDGTITIAATTQEAGDAAKKRI) is the KH domain. In terms of domain architecture, S1 motif spans 622 to 692 (GKVYEGTVVK…DRGRVRLSIK (71 aa)).

It belongs to the polyribonucleotide nucleotidyltransferase family. Mg(2+) serves as cofactor.

It localises to the cytoplasm. The enzyme catalyses RNA(n+1) + phosphate = RNA(n) + a ribonucleoside 5'-diphosphate. Its function is as follows. Involved in mRNA degradation. Catalyzes the phosphorolysis of single-stranded polyribonucleotides processively in the 3'- to 5'-direction. The chain is Polyribonucleotide nucleotidyltransferase from Neisseria gonorrhoeae (strain ATCC 700825 / FA 1090).